A 1087-amino-acid chain; its full sequence is MTTESGSDSESKPDQEAEPQEAAGAQGRAGAPVPEPPKEEQQQALEQFAAAAAHSTPVRREVTDKEQEFAARAAKQLEYQQLEDDKLSQKSSSSKLSRSPLKIVKKPKSMQCKVILLDGSEYTCDVEKRSRGQVLFDKVCEHLNLLEKDYFGLTYRDAENQKNWLDPAKEIKKQVRSGAWHFSFNVKFYPPDPAQLSEDITRYYLCLQLRDDIVSGRLPCSFVTLALLGSYTVQSELGDYDPDECGSDYISEFRFAPNHTKELEDKVIELHKSHRGMTPAEAEMHFLENAKKLSMYGVDLHHAKDSEGVEIMLGVCASGLLIYRDRLRINRFAWPKVLKISYKRNNFYIKIRPGEFEQFESTIGFKLPNHRAAKRLWKVCVEHHTFFRLLLPEAPPKKFLTLGSKFRYSGRTQAQTRRASALIDRPAPYFERSSSKRYTMSRSLDGEVGTGQYATTKGISQTNLITTVTPEKKAEEERDEEEDKRRKGEEVTPISAIRHEGKSPGLGTDSCPLSPPSTHCAPTSPTELRRRCKENDCKLPGYEPSRAEHLPGEPALDSDGPGRPYLGDQDVAFSYRQQTGKGTTLFSFSLQLPESFPSLLDDDGYLSFPNLSETNLLPQSLQHYLPIRSPSLVPCFLFIFFFLLSASFSVPYALTLSFPLALCLCYLEPKAASLSASLDNDPSDSSEEETDSERTDTAADGETTATESDQEEDAELKAQELEKTQDDLMKHQTNISELKRTFLETSTDTAVTNEWEKRLSTSPVRLAARQEDAPMIEPLVPEETKQSSGEKLMDGSEIFSLLESARKPTEFIGGVTSTSQSWVQKMETKTESSGIETEPTVHHLPLSTEKVVQETVLVEERRVVHASGDASYSAGDSGDAAAQPAFTGIKGKEGSALTEGAKEEGGEEVAKAVLEQEETAAASRERQEEQSAAIHISETLEQKPHFESSTVKTETISFGSVSPGGVKLEISTKEVPVVHTETKTITYESSQVDPGTDLEPGVLMSAQTITSETTSTTTTTHITKTVKGGISETRIEKRIVITGDADIDHDQALAQAIKEAKEQHPDMSVTKVVVHKETEITPEDGED.

At Met-1 the chain carries N-acetylmethionine. Positions 1–43 are disordered; the sequence is MTTESGSDSESKPDQEAEPQEAAGAQGRAGAPVPEPPKEEQQQ. At Thr-2 the chain carries N-acetylthreonine; in Band 4.1-like protein 3, N-terminally processed. Low complexity predominate over residues 20-32; that stretch reads QEAAGAQGRAGAP. The residue at position 88 (Ser-88) is a Phosphoserine. Residues 110–391 form the FERM domain; that stretch reads MQCKVILLDG…EHHTFFRLLL (282 aa). The hydrophilic stretch occupies residues 394-513; that stretch reads APPKKFLTLG…PGLGTDSCPL (120 aa). Phosphoserine occurs at positions 420, 443, and 460. The segment covering 459-469 has biased composition (polar residues); sequence ISQTNLITTVT. 4 disordered regions span residues 459-529, 541-563, 675-715, and 937-965; these read ISQT…TELR, GYEP…GPGR, SASL…EDAE, and SETL…SPGG. Thr-469 and Thr-492 each carry phosphothreonine. The spectrin--actin-binding stretch occupies residues 514 to 860; that stretch reads SPPSTHCAPT…VVQETVLVEE (347 aa). Residues 516 to 526 are compositionally biased toward polar residues; the sequence is PSTHCAPTSPT. Over residues 681 to 691 the composition is skewed to acidic residues; it reads DPSDSSEEETD. Over residues 698-707 the composition is skewed to low complexity; sequence AADGETTATE. Residue Thr-706 is modified to Phosphothreonine. A phosphoserine mark is found at Ser-708, Ser-960, and Ser-962. The tract at residues 861–1083 is C-terminal (CTD); the sequence is RRVVHASGDA…VHKETEITPE (223 aa). The span at 947–960 shows a compositional bias: polar residues; it reads ESSTVKTETISFGS. Thr-1081 carries the post-translational modification Phosphothreonine.

As to quaternary structure, interacts (via FERM domain) with CADM1. Interacts (via FERM domain) with PRMT3; the interaction is direct and inhibits the protein-arginine N-methyltransferase activity of PRMT3. Interacts with PRMT5. Interacts with PRMT6. Expressed at high levels in brain, with lower levels in kidney, intestine, and testis. Detected in lung.

It localises to the cytoplasm. It is found in the cytoskeleton. The protein localises to the cell junction. The protein resides in the cell membrane. Tumor suppressor that inhibits cell proliferation and promotes apoptosis. Modulates the activity of protein arginine N-methyltransferases, including PRMT3 and PRMT5. The chain is Band 4.1-like protein 3 from Homo sapiens (Human).